The chain runs to 1313 residues: Inter-alpha-trypsin inhibitor heavy chain H6 (1313 aa).

The first 23 residues, 1 to 23, serve as a signal peptide directing secretion; sequence MSGWRYLICVSFLLTILLELTYQ. The 127-residue stretch at 24–150 folds into the VIT domain; that stretch reads GPPVPASSST…EVTFSLAYEE (127 aa). N-linked (GlcNAc...) asparagine glycosylation is found at asparagine 83, asparagine 374, asparagine 540, and asparagine 594. One can recognise a VWFA domain in the interval 283 to 469; sequence NVVFVIDVSS…LQLKGLYEEI (187 aa). Disordered stretches follow at residues 612 to 644, 783 to 817, 856 to 928, and 959 to 983; these read QPKQ…HGLG, HSKP…TLQV, LKPS…EPLP, and PSRP…SPPN. The segment covering 623-640 has biased composition (polar residues); sequence QTSTSAGPDTIMPSSSSR. Residues 864 to 875 are compositionally biased toward polar residues; the sequence is QISTSISLSKPE. Over residues 876 to 888 the composition is skewed to pro residues; the sequence is TPNPHMPQTPLPP. The segment covering 907–921 has biased composition (low complexity); it reads TISSSTGPSSTTTTS. N-linked (GlcNAc...) asparagine glycosylation is found at asparagine 971 and asparagine 1231.

The protein belongs to the ITIH family.

It is found in the secreted. This chain is Inter-alpha-trypsin inhibitor heavy chain H6 (ITIH6), found in Homo sapiens (Human).